We begin with the raw amino-acid sequence, 108 residues long: UPF0145 protein HDEF_1024 (108 aa).

It belongs to the UPF0145 family.

This is UPF0145 protein HDEF_1024 from Hamiltonella defensa subsp. Acyrthosiphon pisum (strain 5AT).